We begin with the raw amino-acid sequence, 364 residues long: Aminomethyltransferase (364 aa).

It belongs to the GcvT family. As to quaternary structure, the glycine cleavage system is composed of four proteins: P, T, L and H.

It carries out the reaction N(6)-[(R)-S(8)-aminomethyldihydrolipoyl]-L-lysyl-[protein] + (6S)-5,6,7,8-tetrahydrofolate = N(6)-[(R)-dihydrolipoyl]-L-lysyl-[protein] + (6R)-5,10-methylene-5,6,7,8-tetrahydrofolate + NH4(+). Its function is as follows. The glycine cleavage system catalyzes the degradation of glycine. This Shigella boydii serotype 18 (strain CDC 3083-94 / BS512) protein is Aminomethyltransferase.